Reading from the N-terminus, the 105-residue chain is uncharacterized protein (105 aa).

Residues 13–35 (LLFAFVVVIVVLTLSYVYAQNII) form a helical membrane-spanning segment.

The protein resides in the membrane. This is an uncharacterized protein from Archaeoglobus fulgidus (strain ATCC 49558 / DSM 4304 / JCM 9628 / NBRC 100126 / VC-16).